The primary structure comprises 326 residues: MQRHLISAADLTRDDAVLILDTAEEMARVADRPIKKLPTLRGRTVVNLFFEDSTRTRISFEAAEKRLSADVINFTAKGSSVSKGESLKDTAQTLEAMGVDAVVIRHSASGAPYRLATSGWIDAAVVNAGDGTHQHPTQALLDAFTMRRRLVGRDAGLGKDLDGRRITLVGDILHSRVARSNVDLLHTLGAEVTLVAPPTLLPVGVETWPCEVSYDLDSTLPKSDAVMLLRVQRERMNAAFFPTEREYSRRYGLDGDRMAKMPDHAIVMHPGPMVRGMEITAEVADSDRCTVVEQVTNGVSIRMAVLYLLLGGNEPAVSHARPIEEK.

Residues arginine 55 and threonine 56 each contribute to the carbamoyl phosphate site. Lysine 83 is an L-aspartate binding site. The carbamoyl phosphate site is built by arginine 105, histidine 135, and glutamine 138. Arginine 176 and arginine 230 together coordinate L-aspartate. Residues glycine 271 and proline 272 each contribute to the carbamoyl phosphate site.

It belongs to the aspartate/ornithine carbamoyltransferase superfamily. ATCase family. Heterododecamer (2C3:3R2) of six catalytic PyrB chains organized as two trimers (C3), and six regulatory PyrI chains organized as three dimers (R2).

It carries out the reaction carbamoyl phosphate + L-aspartate = N-carbamoyl-L-aspartate + phosphate + H(+). It participates in pyrimidine metabolism; UMP biosynthesis via de novo pathway; (S)-dihydroorotate from bicarbonate: step 2/3. In terms of biological role, catalyzes the condensation of carbamoyl phosphate and aspartate to form carbamoyl aspartate and inorganic phosphate, the committed step in the de novo pyrimidine nucleotide biosynthesis pathway. The sequence is that of Aspartate carbamoyltransferase catalytic subunit from Streptomyces coelicolor (strain ATCC BAA-471 / A3(2) / M145).